We begin with the raw amino-acid sequence, 403 residues long: Casein kinase I isoform delta-A (403 aa).

One can recognise a Protein kinase domain in the interval 9–277; the sequence is YRLGRKIGSG…YLRQLFRNLF (269 aa). ATP is bound by residues 15–23 and K38; that span reads IGSGSFGDI. D128 functions as the Proton acceptor in the catalytic mechanism. The tract at residues 315–340 is autoinhibitory; it reads QGRIPLPRVMLPTSSGRPRGTQEVAP. Positions 322–403 are disordered; the sequence is RVMLPTSSGR…PSGLQSAVPR (82 aa).

This sequence belongs to the protein kinase superfamily. As to quaternary structure, monomer. Interacts with per1 and per2. Component of the circadian core oscillator. In terms of processing, autophosphorylated on serine and threonine residues.

It localises to the cytoplasm. The protein resides in the nucleus. It carries out the reaction L-seryl-[protein] + ATP = O-phospho-L-seryl-[protein] + ADP + H(+). The catalysed reaction is L-threonyl-[protein] + ATP = O-phospho-L-threonyl-[protein] + ADP + H(+). With respect to regulation, exhibits substrate-dependent heparin activation. In terms of biological role, casein kinases are operationally defined by their preferential utilization of acidic proteins such as caseins as substrates. Central component of the circadian clock. May act as a negative regulator of circadian rhythmicity by phosphorylating per1 and per2, which may lead to their degradation. Participates in wnt signaling. This chain is Casein kinase I isoform delta-A (csnk1da), found in Danio rerio (Zebrafish).